We begin with the raw amino-acid sequence, 129 residues long: Large ribosomal subunit protein bL21 (129 aa).

Residues 102 to 129 (TDNAKPTKGPRPKKEKVAKEATKEDAAA) form a disordered region. Residues 116-129 (EKVAKEATKEDAAA) are compositionally biased toward basic and acidic residues.

Belongs to the bacterial ribosomal protein bL21 family. In terms of assembly, part of the 50S ribosomal subunit. Contacts protein L20.

This protein binds to 23S rRNA in the presence of protein L20. The sequence is that of Large ribosomal subunit protein bL21 from Bradyrhizobium diazoefficiens (strain JCM 10833 / BCRC 13528 / IAM 13628 / NBRC 14792 / USDA 110).